Consider the following 58-residue polypeptide: Temporin-1Th (58 aa).

The N-terminal stretch at 1 to 22 (MFTLKKSLLLLFFLGTINLSLC) is a signal peptide. Residues 23–46 (EEERNAEEERRDEPDERDVQVEKR) constitute a propeptide that is removed on maturation. A disordered region spans residues 25–46 (ERNAEEERRDEPDERDVQVEKR). Leu56 is subject to Leucine amide.

In terms of tissue distribution, expressed by the skin glands.

The protein resides in the secreted. Antimicrobial peptide that renders both the outer and inner membrane of bacteria permeable to hydrophobic substances of low molecular mass. The polypeptide is Temporin-1Th (Rana temporaria (European common frog)).